The primary structure comprises 638 residues: MPVITLPDGSQREFDKPVSIMEVAADIGAGLAKATVAGRIDGELVDACELIEHDARIEIVTPKDDDGVHIIRHSCAHLMGHAVKQMWPDAKMAIGPVIDNGFYYDIDVDHTFTQEDLEKIEKRMKELAKTEYAVVKKKASWKEARETFVERHEPYKIEILDEDIPTDATPGLYHHEEYIDMCRGPHVPNMKFCQHFKIMKMAGAYWRGDSDNKMLQRIYGTAWADKKQLKAYLQRLEEAEKRDHRKIAKAQDLFHWQEEAPGMVFWHHNGWTIFRELETYIREKMREYEYQEVKGPMMMDRVLWEKSGHWEKFSELMFTTSSENREYAVKPMNCPGHVQIFNQGLKSYRDLPLRMAEFGSCHRNEPSGALHGLMRVRGFTQDDAHIFCTEQQVQEEVAGCIKMVYETYKTFGFENIDVKLSTRPEKRLGDDATWDRSETALAQALKNNDIDFSYLPGEGAFYGPKIEFTLFDCLGRAWQCGTIQLDFALPGRLGATYVGEDNERHTPVMIHRAILGSLERFMGILIEEYAGHFPLWLSPTQVVLMNITDNQSDYVRKVVKTLNEKGIRASADLRNEKIGFKIREHTLKRVPYLLVVGDKEVEAGEVAVRTRGGEDLGKFPLEDFITRVEDEVRTRKID.

Positions M1–T61 constitute a TGS domain. The segment at D243–P534 is catalytic. Residues C334, H385, and H511 each coordinate Zn(2+).

The protein belongs to the class-II aminoacyl-tRNA synthetase family. As to quaternary structure, homodimer. Zn(2+) is required as a cofactor.

The protein localises to the cytoplasm. It carries out the reaction tRNA(Thr) + L-threonine + ATP = L-threonyl-tRNA(Thr) + AMP + diphosphate + H(+). In terms of biological role, catalyzes the attachment of threonine to tRNA(Thr) in a two-step reaction: L-threonine is first activated by ATP to form Thr-AMP and then transferred to the acceptor end of tRNA(Thr). Also edits incorrectly charged L-seryl-tRNA(Thr). This chain is Threonine--tRNA ligase, found in Idiomarina loihiensis (strain ATCC BAA-735 / DSM 15497 / L2-TR).